The chain runs to 212 residues: uncharacterized protein (212 aa).

The S-adenosyl-L-methionine site is built by Gly-53, Glu-74, and Asp-96.

The protein belongs to the methyltransferase superfamily. YrrT family.

Its function is as follows. Could be a S-adenosyl-L-methionine-dependent methyltransferase. This is an uncharacterized protein from Anoxybacillus flavithermus (strain DSM 21510 / WK1).